Here is a 232-residue protein sequence, read N- to C-terminus: Large ribosomal subunit protein uL1 (232 aa).

It belongs to the universal ribosomal protein uL1 family. Part of the 50S ribosomal subunit.

In terms of biological role, binds directly to 23S rRNA. The L1 stalk is quite mobile in the ribosome, and is involved in E site tRNA release. Its function is as follows. Protein L1 is also a translational repressor protein, it controls the translation of the L11 operon by binding to its mRNA. In Variovorax paradoxus (strain S110), this protein is Large ribosomal subunit protein uL1.